The chain runs to 485 residues: MTITPQNLIALLPLLIVGLTVVVVMLSIAWRRNHFLNATLSVIGLNAALVSLWFVGQAGAMDVTPLMRVDGFAMLYTGLVLLASLATCTFAYPWLEGYNDNKDEFYLLVLIAALGGILLANANHLASLFLGIELISLPLFGLVGYAFRQKRSLEASIKYTILSAAASSFLLFGMALVYAQSGDLSFVALGKNLGDGMLNEPLLLAGFGMMIVGLGFKLSLVPFHLWTPDVYQGAPAPVSTFLATASKIAIFGVVMRLFLYAPVGDSEAIRVVLAIIAFASIIFGNLMALSQTNIKRLLGYSSISHLGYLLVALIALQTGEMSMEAVGVYLAGYLFSSLGAFGVVSLMSSPYRGPDADSLFSYRGLFWHRPILAAVMTVMMLSLAGIPMTLGFIGKFYVLAVGVQAHLWWLVGAVVVGSAIGLYYYLRVAVSLYLHAPEQPGRDAPSNWQYSAGGIVVLISALLVLVLGVWPQPLISIVRLAMPLM.

A run of 14 helical transmembrane segments spans residues 8 to 28, 35 to 55, 71 to 91, 105 to 125, 127 to 147, 159 to 179, 203 to 223, 235 to 255, 271 to 291, 297 to 317, 326 to 346, 373 to 393, 408 to 430, and 455 to 475; these read LIAL…MLSI, FLNA…LWFV, GFAM…CTFA, FYLL…ANHL, SLFL…GYAF, YTIL…LVYA, LLAG…LVPF, PAPV…GVVM, VVLA…ALSQ, LLGY…IALQ, VGVY…VVSL, AAVM…LGFI, WWLV…RVAV, and IVVL…QPLI.

This sequence belongs to the complex I subunit 2 family. NDH-1 is composed of 13 different subunits. Subunits NuoA, H, J, K, L, M, N constitute the membrane sector of the complex.

The protein resides in the cell inner membrane. The catalysed reaction is a quinone + NADH + 5 H(+)(in) = a quinol + NAD(+) + 4 H(+)(out). In terms of biological role, NDH-1 shuttles electrons from NADH, via FMN and iron-sulfur (Fe-S) centers, to quinones in the respiratory chain. The immediate electron acceptor for the enzyme in this species is believed to be ubiquinone. Couples the redox reaction to proton translocation (for every two electrons transferred, four hydrogen ions are translocated across the cytoplasmic membrane), and thus conserves the redox energy in a proton gradient. The protein is NADH-quinone oxidoreductase subunit N of Shigella flexneri.